The primary structure comprises 271 residues: Protein FANTASTIC FOUR 1 (271 aa).

The FAF domain maps to 114–168; the sequence is NSFPPPLNSVNGFNNSRMVKSYKEDGRLVVQAIRVCSPPRCFVSERREGRLRLCL. Residues 174-255 are disordered; it reads NSQDAEEEFE…KRRCNENGCE (82 aa). Residues 177–224 show a composition bias toward acidic residues; that stretch reads DAEEEFEEEDEDDQYDAEEEEEEEEEEEEEEEEEEEEEEEEEEEDEEG. Positions 237–247 are enriched in basic residues; sequence GNKKVSNRPKR.

Belongs to the fantastic four family. In terms of tissue distribution, expressed in the shoot apex, stamens, anthers and young siliques. Detected in provascular and vascular tissue.

Functionally, able to repress WUS when constitutively overexpressed, but have no effect on CLV3. The polypeptide is Protein FANTASTIC FOUR 1 (FAF1) (Arabidopsis thaliana (Mouse-ear cress)).